A 219-amino-acid polypeptide reads, in one-letter code: Mediator of RNA polymerase II transcription subunit 18 (219 aa).

Belongs to the Mediator complex subunit 18 family. As to quaternary structure, component of the Mediator complex. Interacts with YY1 to suppress disease susceptibility via the repression of genes glutaredoxins GRX480, GRXS13 and thioredoxin TRX-h5. Binds to ABI4 to regulate abscisic acid responses; recruited by ABI4 to ABI5 promoter in the presence of abscisic acid (ABA). Interacts with SUF4 to regulate flowering time; recruited by SUF4 to FLC promoter.

The protein localises to the nucleus. Component of the Mediator complex, a coactivator involved in the regulated transcription of nearly all RNA polymerase II-dependent genes. Mediator functions as a bridge to convey information from gene-specific regulatory proteins to the basal RNA polymerase II transcription machinery. The Mediator complex, having a compact conformation in its free form, is recruited to promoters by direct interactions with regulatory proteins and serves for the assembly of a functional pre-initiation complex with RNA polymerase II and the general transcription factors. Involved in the regulation of histone H3 lysine tri-methylation (H3K36me3). Associates with the promoter, coding and terminator regions of target genes suggesting its function in transcription initiation, elongation and termination. Multifunctional protein which regulates plant immunity, especially during necrotrophic fungal infection (e.g. B.cinerea and A.brassicicola), flowering time and responses to hormones (e.g. abscisic acid ABA and ethylene) through interactions with distinct transcription factors. The chain is Mediator of RNA polymerase II transcription subunit 18 from Arabidopsis thaliana (Mouse-ear cress).